The primary structure comprises 764 residues: Mitogen-activated protein kinase kinase kinase 1b (764 aa).

4 disordered regions span residues 1–81 (MVEE…IQQQ), 120–260 (KSIA…TATR), 325–348 (PNLA…SSAM), and 360–392 (VPEL…HYGS). The span at 14–30 (GSWGSGEDGGSSHGGKG) shows a compositional bias: gly residues. 2 stretches are compositionally biased toward low complexity: residues 60-76 (VHST…LSKS) and 125-135 (SQPLSSPSLSQ). Residues 136–145 (EHGEASHSND) are compositionally biased toward basic and acidic residues. A compositionally biased stretch (polar residues) spans 184-201 (YVNSQPQNHYGRKNSPSQ). The 254-residue stretch at 431–684 (WFKGDFIGSG…CDMLLTHPFI (254 aa)) folds into the Protein kinase domain. Residues 437–445 (IGSGTFGSV) and Lys459 contribute to the ATP site. Asp554 serves as the catalytic Proton acceptor. The disordered stretch occupies residues 706-764 (EERSIDVSESPSIATSSQSGSSPSVAGDAVSPASVAVRPRSMRTLRSEFSMSSPESIAS). Low complexity predominate over residues 715-729 (SPSIATSSQSGSSPS). A compositionally biased stretch (polar residues) spans 752–764 (SEFSMSSPESIAS).

It belongs to the protein kinase superfamily. STE Ser/Thr protein kinase family. MAP kinase kinase kinase subfamily.

It localises to the cell membrane. The enzyme catalyses L-seryl-[protein] + ATP = O-phospho-L-seryl-[protein] + ADP + H(+). It carries out the reaction L-threonyl-[protein] + ATP = O-phospho-L-threonyl-[protein] + ADP + H(+). Its function is as follows. The CERK1, MEKK1a/b, MKK1a/b/c and MPK4a/b proteins are involved in pathogen defense. The pathway induces rapid growth inhibition, cell wall depositions and accumulation of defense-related transcripts. This protein is required for responses to chitin and acts redundantly with MEKK1a. This Physcomitrium patens (Spreading-leaved earth moss) protein is Mitogen-activated protein kinase kinase kinase 1b (MEKK1b).